Consider the following 121-residue polypeptide: Small ribosomal subunit protein uS13 (121 aa).

The interval 93 to 121 is disordered; sequence RGLPVRGQNSKNNARTRKGPRRTVANKKK. Basic residues predominate over residues 106–121; the sequence is ARTRKGPRRTVANKKK.

This sequence belongs to the universal ribosomal protein uS13 family. Part of the 30S ribosomal subunit. Forms a loose heterodimer with protein S19. Forms two bridges to the 50S subunit in the 70S ribosome.

In terms of biological role, located at the top of the head of the 30S subunit, it contacts several helices of the 16S rRNA. In the 70S ribosome it contacts the 23S rRNA (bridge B1a) and protein L5 of the 50S subunit (bridge B1b), connecting the 2 subunits; these bridges are implicated in subunit movement. Contacts the tRNAs in the A and P-sites. This Bacillus subtilis (strain 168) protein is Small ribosomal subunit protein uS13.